The sequence spans 85 residues: Large ribosomal subunit protein bL27 (85 aa).

The disordered stretch occupies residues 1–22 (MAHKKAGGSTRNGRDSESKRLG).

The protein belongs to the bacterial ribosomal protein bL27 family.

In Vibrio parahaemolyticus serotype O3:K6 (strain RIMD 2210633), this protein is Large ribosomal subunit protein bL27.